The chain runs to 256 residues: Acetyl-coenzyme A carboxylase carboxyl transferase subunit alpha (256 aa).

A CoA carboxyltransferase C-terminal domain is found at 1 to 236; the sequence is MTDVARILKE…KEHLKTEINQ (236 aa).

It belongs to the AccA family. As to quaternary structure, acetyl-CoA carboxylase is a heterohexamer composed of biotin carboxyl carrier protein (AccB), biotin carboxylase (AccC) and two subunits each of ACCase subunit alpha (AccA) and ACCase subunit beta (AccD).

The protein localises to the cytoplasm. It carries out the reaction N(6)-carboxybiotinyl-L-lysyl-[protein] + acetyl-CoA = N(6)-biotinyl-L-lysyl-[protein] + malonyl-CoA. It participates in lipid metabolism; malonyl-CoA biosynthesis; malonyl-CoA from acetyl-CoA: step 1/1. Functionally, component of the acetyl coenzyme A carboxylase (ACC) complex. First, biotin carboxylase catalyzes the carboxylation of biotin on its carrier protein (BCCP) and then the CO(2) group is transferred by the carboxyltransferase to acetyl-CoA to form malonyl-CoA. In Streptococcus uberis (strain ATCC BAA-854 / 0140J), this protein is Acetyl-coenzyme A carboxylase carboxyl transferase subunit alpha.